The following is a 68-amino-acid chain: Putative membrane protein insertion efficiency factor (68 aa).

This sequence belongs to the UPF0161 family.

The protein resides in the cell inner membrane. Its function is as follows. Could be involved in insertion of integral membrane proteins into the membrane. The protein is Putative membrane protein insertion efficiency factor of Aquifex aeolicus (strain VF5).